Consider the following 84-residue polypeptide: Small ribosomal subunit protein bS16 (84 aa).

Belongs to the bacterial ribosomal protein bS16 family.

The polypeptide is Small ribosomal subunit protein bS16 (Deinococcus radiodurans (strain ATCC 13939 / DSM 20539 / JCM 16871 / CCUG 27074 / LMG 4051 / NBRC 15346 / NCIMB 9279 / VKM B-1422 / R1)).